Consider the following 416-residue polypeptide: Putative L-glutamine:3-amino-2,3-dideoxy-scyllo-inosose aminotransferase (416 aa).

Residue K199 is modified to N6-(pyridoxal phosphate)lysine.

This sequence belongs to the DegT/DnrJ/EryC1 family. L-glutamine:2-deoxy-scyllo-inosose/scyllo-inosose aminotransferase subfamily. Pyridoxal 5'-phosphate serves as cofactor.

The enzyme catalyses 3-amino-2,3-dideoxy-scyllo-inosose + L-glutamine = 2-deoxystreptamine + 2-oxoglutaramate. It functions in the pathway metabolic intermediate biosynthesis; 2-deoxystreptamine biosynthesis; 2-deoxystreptamine from D-glucose 6-phosphate: step 4/4. Its pathway is antibiotic biosynthesis; tobramycin biosynthesis. Its function is as follows. Catalyzes the transamination of 3-amino-2,3-dideoxy-scyllo-inosose (amino-DOI) into 2-deoxystreptamine (DOS). This Streptoalloteichus tenebrarius (strain ATCC 17920 / DSM 40477 / JCM 4838 / CBS 697.72 / NBRC 16177 / NCIMB 11028 / NRRL B-12390 / A12253. 1 / ISP 5477) (Streptomyces tenebrarius) protein is Putative L-glutamine:3-amino-2,3-dideoxy-scyllo-inosose aminotransferase (tobS2).